Reading from the N-terminus, the 191-residue chain is Cytochrome c oxidase assembly protein CtaG (191 aa).

Over 1–9 (MSLSPHQKT) the chain is Cytoplasmic. A helical; Signal-anchor for type II membrane protein transmembrane segment spans residues 10 to 30 (AGGLVLVVAVMGAASFAAVPF). The Periplasmic segment spans residues 31 to 191 (YNWFCRVTGF…LAAESATDVN (161 aa)).

This sequence belongs to the COX11/CtaG family.

The protein localises to the cell inner membrane. Exerts its effect at some terminal stage of cytochrome c oxidase synthesis, probably by being involved in the insertion of the copper B into subunit I. The chain is Cytochrome c oxidase assembly protein CtaG from Cereibacter sphaeroides (strain ATCC 17023 / DSM 158 / JCM 6121 / CCUG 31486 / LMG 2827 / NBRC 12203 / NCIMB 8253 / ATH 2.4.1.) (Rhodobacter sphaeroides).